The primary structure comprises 229 residues: 3,4-dihydroxy-2-butanone 4-phosphate synthase (229 aa).

Residues 28–29 (RE), Asp33, 164–168 (RGGHT), and Glu188 contribute to the D-ribulose 5-phosphate site. Mg(2+) is bound at residue Glu29. His167 contacts Mg(2+).

This sequence belongs to the DHBP synthase family. As to quaternary structure, homodimer. Mg(2+) serves as cofactor. The cofactor is Mn(2+).

It carries out the reaction D-ribulose 5-phosphate = (2S)-2-hydroxy-3-oxobutyl phosphate + formate + H(+). Its pathway is cofactor biosynthesis; riboflavin biosynthesis; 2-hydroxy-3-oxobutyl phosphate from D-ribulose 5-phosphate: step 1/1. Its function is as follows. Catalyzes the conversion of D-ribulose 5-phosphate to formate and 3,4-dihydroxy-2-butanone 4-phosphate. This is 3,4-dihydroxy-2-butanone 4-phosphate synthase from Methanothermobacter thermautotrophicus (strain ATCC 29096 / DSM 1053 / JCM 10044 / NBRC 100330 / Delta H) (Methanobacterium thermoautotrophicum).